A 540-amino-acid chain; its full sequence is 2-isopropylmalate synthase (540 aa).

A Pyruvate carboxyltransferase domain is found at 8–273 (VLIFDTTLRD…FFGRDEDSPT (266 aa)). Residues aspartate 17, histidine 208, histidine 210, and asparagine 244 each contribute to the Mn(2+) site. Residues 408 to 540 (QLKLVQVSCG…MAQLDSSPVH (133 aa)) are regulatory domain.

It belongs to the alpha-IPM synthase/homocitrate synthase family. LeuA type 1 subfamily. In terms of assembly, homodimer. It depends on Mn(2+) as a cofactor.

The protein resides in the cytoplasm. The enzyme catalyses 3-methyl-2-oxobutanoate + acetyl-CoA + H2O = (2S)-2-isopropylmalate + CoA + H(+). Its pathway is amino-acid biosynthesis; L-leucine biosynthesis; L-leucine from 3-methyl-2-oxobutanoate: step 1/4. Its function is as follows. Catalyzes the condensation of the acetyl group of acetyl-CoA with 3-methyl-2-oxobutanoate (2-ketoisovalerate) to form 3-carboxy-3-hydroxy-4-methylpentanoate (2-isopropylmalate). This Synechococcus sp. (strain CC9311) protein is 2-isopropylmalate synthase.